Here is a 579-residue protein sequence, read N- to C-terminus: MAFCISYLGAVLPFSLSPRTKFAIFHNTSKHAAYKTCRWNIPRDVGSTPPPSKLHQALCLNAHSTSCMAELPMDYEGKIQGTRHLLHLKDENDPIESLIFVDATQRLGVNHHFQKEIEEILRKSYATMKSPSICKYHTLHDVSLFFCLMRQHGRYVSADVFNNFKGESGRFKEELKRDTRGLVELYEAAQLSFEGERILDEAENFSRQILHGNLASMEDNLRRSVGNKLRYPFHKSIARFTGINYDDDLGGMYEWGKTLRELALMDLQVERSVYQEELLQVSKWWNELGLYKKLTLARNRPFEFYMWSMVILTDYINLSEQRVELTKSVAFIYLIDDIFDVYGTLDELIIFTEAVNKWDYSATDTLPDNMKMCYMTLLDTINGTSQKIYEKYGHNPIDSLKTTWKSLCSAFLVEAKWSASGSLPSANEYLENEKVSSGVYVVLIHLFFLMGLGGTNRGSIELNDTRELMSSIAIIVRIWNDLGCAKNEHQNGKDGSYLDCYKKEHINLTAAQVHEHALELVAIEWKRLNKESFNLNHDSVSSFKQAALNFARMVPLMYSYDNNRRGPVLEEYVKFMLSD.

A chloroplast-targeting transit peptide spans 1–66; it reads MAFCISYLGA…ALCLNAHSTS (66 aa). N-linked (GlcNAc...) asparagine glycosylation is found at Asn-27, Asn-204, and Asn-317. Mg(2+) contacts are provided by Asp-336 and Asp-340. Residues 336–340 carry the DDXXD motif motif; sequence DDIFD. N-linked (GlcNAc...) asparagine glycosylation is found at Asn-382 and Asn-463. Residues Asn-480 and Glu-488 each coordinate Mg(2+). Residue Asn-507 is glycosylated (N-linked (GlcNAc...) asparagine).

The protein belongs to the terpene synthase family. Tpsg subfamily. The cofactor is Mg(2+). Requires Mn(2+) as cofactor. Accumulates in flowers; mostly expressed in both upper and lower petal lobes, and, to a lower extent, in tube and stamens.

It localises to the plastid. It is found in the chloroplast stroma. It catalyses the reaction (2E)-geranyl diphosphate = tricyclene + diphosphate. The enzyme catalyses (2E)-geranyl diphosphate = (E)-beta-ocimene + diphosphate. It functions in the pathway secondary metabolite biosynthesis; terpenoid biosynthesis. Functionally, contributes to floral scent emission. The sequence is that of Tricyclene synthase 0e23, chloroplastic (0e23) from Antirrhinum majus (Garden snapdragon).